We begin with the raw amino-acid sequence, 377 residues long: Cytoplasmic tRNA 2-thiolation protein 1 (377 aa).

Belongs to the TtcA family. CTU1/NCS6/ATPBD3 subfamily.

The protein localises to the cytoplasm. It participates in tRNA modification; 5-methoxycarbonylmethyl-2-thiouridine-tRNA biosynthesis. Its function is as follows. Plays a central role in 2-thiolation of mcm(5)S(2)U at tRNA wobble positions of tRNA(Lys), tRNA(Glu) and tRNA(Gln). Directly binds tRNAs and probably acts by catalyzing adenylation of tRNAs, an intermediate required for 2-thiolation. It is unclear whether it acts as a sulfurtransferase that transfers sulfur from thiocarboxylated URM1 onto the uridine of tRNAs at wobble position. Prior mcm(5) tRNA modification by the elongator complex is required for 2-thiolation. May also be involved in protein urmylation. The protein is Cytoplasmic tRNA 2-thiolation protein 1 of Debaryomyces hansenii (strain ATCC 36239 / CBS 767 / BCRC 21394 / JCM 1990 / NBRC 0083 / IGC 2968) (Yeast).